A 96-amino-acid polypeptide reads, in one-letter code: Mapk-regulated corepressor-interacting protein 1 (96 aa).

Disordered regions lie at residues Met-1 to Ile-28 and Ala-76 to Ser-96. The PXDLS motif motif lies at Pro-79–Ser-83. A compositionally biased stretch (basic and acidic residues) spans Asp-81–Ser-96.

This sequence belongs to the MCRIP family.

It is found in the nucleus. It localises to the cytoplasm. Its subcellular location is the stress granule. Its function is as follows. May play a role in the regulation of the epithelial-mesenchymal transition. The polypeptide is Mapk-regulated corepressor-interacting protein 1 (MCRIP1) (Gallus gallus (Chicken)).